Reading from the N-terminus, the 537-residue chain is Glutamyl-tRNA(Gln) amidotransferase subunit B, chloroplastic/mitochondrial (537 aa).

It belongs to the GatB/GatE family. GatB subfamily. As to quaternary structure, subunit of the heterotrimeric GatCAB amidotransferase (AdT) complex, composed of A, B and C subunits.

It localises to the mitochondrion. It is found in the plastid. Its subcellular location is the chloroplast. The catalysed reaction is L-glutamyl-tRNA(Gln) + L-glutamine + ATP + H2O = L-glutaminyl-tRNA(Gln) + L-glutamate + ADP + phosphate + H(+). In terms of biological role, allows the formation of correctly charged Gln-tRNA(Gln) through the transamidation of misacylated Glu-tRNA(Gln) in chloroplasts and mitochondria. The reaction takes place in the presence of glutamine and ATP through an activated gamma-phospho-Glu-tRNA(Gln). The chain is Glutamyl-tRNA(Gln) amidotransferase subunit B, chloroplastic/mitochondrial from Ostreococcus tauri.